The primary structure comprises 801 residues: Squamosa promoter-binding-like protein 7 (801 aa).

Disordered stretches follow at residues 1–23 (MSSL…LVND) and 59–91 (SPPL…DRVR). Residues 135 to 212 (VARCQVPDCE…ERHNNRRKRK (78 aa)) form an SBP-type; atypical zinc finger. C138, C143, C160, C163, C179, C182, H186, and C198 together coordinate Zn(2+). The Bipartite nuclear localization signal signature appears at 195–211 (KRSCRRKLERHNNRRKR). The span at 203-213 (ERHNNRRKRKP) shows a compositional bias: basic residues. 2 disordered regions span residues 203 to 258 (ERHN…PSLI) and 286 to 313 (GSGE…NKSA). Positions 222-233 (EQQQVLSQNDNS) are enriched in polar residues. Positions 249 to 258 (QRAEEEPSLI) are enriched in basic and acidic residues. Residues 304-313 (SPSNGDNKSA) show a composition bias toward polar residues.

In terms of assembly, homodimer. Interacts with KIN17. Interacts with HY5. Zn(2+) serves as cofactor. As to expression, expressed in roots rosette leaves, cauline leaves, stems, flowers and siliques.

Its subcellular location is the nucleus speckle. Functionally, transcription factor that participates in reprogramming global gene expression during copper deficiency in order to improve the metal uptake and prioritize its distribution to copper proteins of major importance. Binds directly to 5'-GTAC-3' motifs in the microRNA (miRNA) promoter of the stress-responsive miRNAs miR398b and miR398c to activate their transcription. During copper deficiency, activates the copper transporters COPT1 and COPT2, and the copper chaperone CCH, directly or indirectly via miRNAs. Required for the expression of the miRNAs miR397, miR408 and miR857. Acts coordinately with HY5 to regulate miR408 and its target genes in response to changes in light and copper conditions. Activates miR857 and its target genes in response to low copper conditions. Involved in cadmium stress response by regulating miR397a, miR398b, miR398c and miR857. Required for iron homeostasis during copper deficiency. This chain is Squamosa promoter-binding-like protein 7 (SPL7), found in Arabidopsis thaliana (Mouse-ear cress).